Reading from the N-terminus, the 22-residue chain is Motilin (22 aa).

Positions F1–Q22 are disordered. A compositionally biased stretch (basic and acidic residues) spans E9–Q22.

The protein belongs to the motilin family.

The protein localises to the secreted. In terms of biological role, plays an important role in the regulation of interdigestive gastrointestinal motility and indirectly causes rhythmic contraction of duodenal and colonic smooth muscle. The sequence is that of Motilin (MLN) from Canis lupus familiaris (Dog).